A 496-amino-acid chain; its full sequence is Geranylhydroquinone 3''-hydroxylase CYP76B74 (496 aa).

The chain crosses the membrane as a helical span at residues 3–23 (YTTILVGFLIGFVLFKALTRK). Cys436 serves as a coordination point for heme.

This sequence belongs to the cytochrome P450 family. The cofactor is heme.

The protein resides in the endoplasmic reticulum membrane. It catalyses the reaction (2E)-geranylhydroquinone + reduced [NADPH--hemoprotein reductase] + O2 = (2Z)-3''-hydroxygeranylhydroquinone + oxidized [NADPH--hemoprotein reductase] + H2O + H(+). Its function is as follows. Hydroxylase involved in the biosynthesis pathway of the red naphthoquinone pigment shikonin. Catalyzes the key step C-3''-hydroxylation of the prenylated phenolic intermediate geranylhydroquinone to form 3''-hydroxygeranylhydroquinone. The sequence is that of Geranylhydroquinone 3''-hydroxylase CYP76B74 from Arnebia euchroma (Pink arnebia).